Here is a 1117-residue protein sequence, read N- to C-terminus: DNA polymerase II large subunit (1117 aa).

Over residues 279 to 294 (STKEEEKKKEESSENK) the composition is skewed to basic and acidic residues. Residues 279–299 (STKEEEKKKEESSENKPKKKA) are disordered.

Belongs to the archaeal DNA polymerase II family. Heterodimer of a large subunit and a small subunit.

It carries out the reaction DNA(n) + a 2'-deoxyribonucleoside 5'-triphosphate = DNA(n+1) + diphosphate. The enzyme catalyses Exonucleolytic cleavage in the 3'- to 5'-direction to yield nucleoside 5'-phosphates.. In terms of biological role, possesses two activities: a DNA synthesis (polymerase) and an exonucleolytic activity that degrades single-stranded DNA in the 3'- to 5'-direction. Has a template-primer preference which is characteristic of a replicative DNA polymerase. The sequence is that of DNA polymerase II large subunit from Methanosphaera stadtmanae (strain ATCC 43021 / DSM 3091 / JCM 11832 / MCB-3).